The chain runs to 1154 residues: Nitric oxide synthase, inducible (1154 aa).

The disordered stretch occupies residues 22 to 58; it reads KDINNNVEKPPGATPSPSTQDDLKNHKHHNDSPQPLT. A DINNN-motif; mediates interaction with SPSB1, SPSB2 and SPSB4 motif is present at residues 23-27; that stretch reads DINNN. Cysteine 107 and cysteine 112 together coordinate Zn(2+). Cysteine 197 provides a ligand contact to heme b. L-arginine-binding residues include glutamine 260, tryptophan 369, tyrosine 370, and glutamate 374. (6R)-L-erythro-5,6,7,8-tetrahydrobiopterin is bound by residues arginine 378, isoleucine 459, tryptophan 460, and phenylalanine 473. Residue tyrosine 488 participates in heme b binding. A calmodulin-binding region spans residues 512-532; that stretch reads LKVLVKAVLFASMLMRKTMAS. The Flavodoxin-like domain maps to 536-674; that stretch reads VTILFATETG…AFRCWAVQTF (139 aa). Residues threonine 542, glutamate 543, threonine 544, lysine 546, and serine 547 each contribute to the FMN site. Residue tyrosine 572 is modified to Phosphotyrosine. The FMN site is built by serine 588, threonine 589, serine 625, cysteine 632, and glutamate 658. The FAD-binding FR-type domain maps to 727–967; the sequence is KNVFTLRLKS…VRSAGNFKLP (241 aa). NADP(+) is bound at residue arginine 747. The FAD site is built by histidine 769, arginine 903, tyrosine 905, serine 906, threonine 921, alanine 923, tyrosine 927, valine 940, cysteine 941, and serine 942. Residues threonine 981, arginine 1014, serine 1043, arginine 1044, lysine 1050, tyrosine 1052, glutamine 1054, and aspartate 1087 each coordinate NADP(+).

Belongs to the NOS family. As to quaternary structure, homodimer. Interacts with NHERF1. Interacts with GAPDH; induced by oxidatively-modified low-densitity lipoprotein (LDL(ox)). Interacts with S100A8 and S100A9 to form the iNOS-S100A8/9 transnitrosylase complex. Interacts with SPSB1, SPSB2 and SPSB4. Interacts with ELOC and CUL5 in the presence of SPSB1 or SPSB2 or SPSB4. Forms a complex with ASL, ASS1 and HSP90AA1; the complex regulates cell-autonomous L-arginine synthesis and citrulline recycling while channeling extracellular L-arginine to nitric oxide synthesis pathway. The cofactor is heme b. FAD is required as a cofactor. Requires FMN as cofactor. It depends on (6R)-L-erythro-5,6,7,8-tetrahydrobiopterin as a cofactor. Polyubiquitinated; mediated by SPSB1, SPSB2 and SPSB4, leading to proteasomal degradation.

It is found in the cytoplasm. The protein localises to the cytosol. It carries out the reaction 2 L-arginine + 3 NADPH + 4 O2 + H(+) = 2 L-citrulline + 2 nitric oxide + 3 NADP(+) + 4 H2O. Regulated by calcium/calmodulin. Functionally, produces nitric oxide (NO) which is a messenger molecule with diverse functions throughout the body. In macrophages, NO mediates tumoricidal and bactericidal actions. Also has nitrosylase activity and mediates cysteine S-nitrosylation of cytoplasmic target proteins such PTGS2/COX2. As component of the iNOS-S100A8/9 transnitrosylase complex involved in the selective inflammatory stimulus-dependent S-nitrosylation of GAPDH implicated in regulation of the GAIT complex activity and probably multiple targets including ANXA5, EZR, MSN and VIM. Involved in inflammation, enhances the synthesis of pro-inflammatory mediators such as IL6 and IL8. The polypeptide is Nitric oxide synthase, inducible (NOS2) (Canis lupus familiaris (Dog)).